Reading from the N-terminus, the 760-residue chain is DNA replication licensing factor mcm7 (760 aa).

Positions Val353 to Val559 constitute an MCM domain. Residues Tyr366, Gly406, Ala408, Lys409, Ser410, Asn511, Arg536, and Arg630 each contribute to the ATP site. Positions Ser535–Asp538 match the Arginine finger motif.

Belongs to the MCM family. Component of the mcm2-7 complex. The complex forms a toroidal hexameric ring with the proposed subunit order mcm2-mcm6-mcm4-mcm7-mcm3-mcm5. The heterodimers of mcm4/mcm6 and mcm3/mcm5 interact with mcm2 and mcm7. Interacts with sld3 and mcm10.

It is found in the nucleus. It carries out the reaction ATP + H2O = ADP + phosphate + H(+). Its function is as follows. Acts as a component of the MCM2-7 complex (MCM complex) which is the replicative helicase essential for 'once per cell cycle' DNA replication initiation and elongation in eukaryotic cells. Core component of CDC45-MCM-GINS (CMG) helicase, the molecular machine that unwinds template DNA during replication, and around which the replisome is built. The active ATPase sites in the MCM2-7 ring are formed through the interaction surfaces of two neighboring subunits such that a critical structure of a conserved arginine finger motif is provided in trans relative to the ATP-binding site of the Walker A box of the adjacent subunit. The six ATPase active sites, however, are likely to contribute differentially to the complex helicase activity. Required for the progression of S phase. The chain is DNA replication licensing factor mcm7 (mcm7) from Schizosaccharomyces pombe (strain 972 / ATCC 24843) (Fission yeast).